Reading from the N-terminus, the 254-residue chain is Geranylgeranylglyceryl phosphate synthase (254 aa).

Residues aspartate 28 and serine 53 each contribute to the Mg(2+) site. Sn-glycerol 1-phosphate contacts are provided by residues 172–178, 203–204, and 225–226; these read YLEAGSG, GG, and GT.

The protein belongs to the GGGP/HepGP synthase family. Group II subfamily. Mg(2+) serves as cofactor.

Its subcellular location is the cytoplasm. It catalyses the reaction sn-glycerol 1-phosphate + (2E,6E,10E)-geranylgeranyl diphosphate = sn-3-O-(geranylgeranyl)glycerol 1-phosphate + diphosphate. It functions in the pathway membrane lipid metabolism; glycerophospholipid metabolism. Functionally, prenyltransferase that catalyzes the transfer of the geranylgeranyl moiety of geranylgeranyl diphosphate (GGPP) to the C3 hydroxyl of sn-glycerol-1-phosphate (G1P). This reaction is the first ether-bond-formation step in the biosynthesis of archaeal membrane lipids. The chain is Geranylgeranylglyceryl phosphate synthase from Methanococcus vannielii (strain ATCC 35089 / DSM 1224 / JCM 13029 / OCM 148 / SB).